The chain runs to 413 residues: Serine/threonine transporter SstT (413 aa).

Transmembrane regions (helical) follow at residues 11–31 (IANG…VILA), 43–63 (FLGS…VFVL), 82–102 (IIGL…LFSF), 141–161 (ALLT…GITM), 192–212 (IGIF…ALAG), 216–236 (LLMV…PIIV), 298–318 (MGGA…TLGI), 339–359 (ASGV…LFGI), and 363–383 (VAMQ…SAET).

The protein belongs to the dicarboxylate/amino acid:cation symporter (DAACS) (TC 2.A.23) family.

It localises to the cell inner membrane. It carries out the reaction L-serine(in) + Na(+)(in) = L-serine(out) + Na(+)(out). The catalysed reaction is L-threonine(in) + Na(+)(in) = L-threonine(out) + Na(+)(out). Involved in the import of serine and threonine into the cell, with the concomitant import of sodium (symport system). This chain is Serine/threonine transporter SstT, found in Shewanella frigidimarina (strain NCIMB 400).